A 104-amino-acid chain; its full sequence is L-rhamnose mutarotase (104 aa).

Tyr18 is a substrate binding site. The active-site Proton donor is His22. Substrate contacts are provided by residues Tyr41 and 76-77; that span reads WW.

Belongs to the rhamnose mutarotase family. Homodimer.

It localises to the cytoplasm. It carries out the reaction alpha-L-rhamnose = beta-L-rhamnose. Its pathway is carbohydrate metabolism; L-rhamnose metabolism. In terms of biological role, involved in the anomeric conversion of L-rhamnose. This Escherichia coli O1:K1 / APEC protein is L-rhamnose mutarotase.